Consider the following 154-residue polypeptide: Cytochrome c-type biogenesis protein CcmE (154 aa).

Residues 1–8 (MHPQRKQR) are Cytoplasmic-facing. Residues 9–29 (LMIVLFIVVFSSLAVGLIAYA) form a helical; Signal-anchor for type II membrane protein membrane-spanning segment. Topologically, residues 30–154 (LRENINLFYP…ATCGGLNYGA (125 aa)) are periplasmic. Histidine 124 and tyrosine 128 together coordinate heme.

The protein belongs to the CcmE/CycJ family.

It is found in the cell inner membrane. Heme chaperone required for the biogenesis of c-type cytochromes. Transiently binds heme delivered by CcmC and transfers the heme to apo-cytochromes in a process facilitated by CcmF and CcmH. The chain is Cytochrome c-type biogenesis protein CcmE from Cellvibrio japonicus (strain Ueda107) (Pseudomonas fluorescens subsp. cellulosa).